The primary structure comprises 1239 residues: Inner tegument protein (1239 aa).

The segment covering 1–10 has biased composition (low complexity); sequence MASAMESDSS. 3 disordered regions span residues 1–20, 672–708, and 1090–1239; these read MASA…DAQP, GESP…GGPW, and GRNA…AEDE. The interaction with large tegument protein stretch occupies residues 618–1239; that stretch reads NELPKTRSLA…RPPRPTAEDE (622 aa). The segment covering 1115-1126 has biased composition (low complexity); the sequence is DSSPFSFSSSDF. Over residues 1127 to 1136 the composition is skewed to acidic residues; it reads SDQDEGEGGE. Positions 1181–1190 are enriched in low complexity; it reads RTTPSPSRRA. Positions 1219–1232 are enriched in basic residues; sequence VRPRTRRGATRRPP.

The protein belongs to the herpesviridae inner tegument protein family. In terms of assembly, interacts (via C-terminus) with the large tegument protein/LTP (via N-terminus).

It localises to the virion tegument. Its subcellular location is the host cytoplasm. It is found in the host nucleus. The protein resides in the host Golgi apparatus. The protein localises to the host trans-Golgi network. Functionally, plays an essential role in cytoplasmic secondary envelopment during viral egress. Interacts with the capsid via the large tegument protein/LTP and participates in its transport to the host trans-Golgi network (TGN) where secondary envelopment occurs. Modulates tegumentation and capsid accumulation at the viral assembly complex. The protein is Inner tegument protein of Homo sapiens (Human).